The primary structure comprises 437 residues: Zinc finger protein 491 (437 aa).

The C2H2-type 1; degenerate zinc finger occupies 35–59 (KSCESGTCGEIFMGYSSFNRNIRTD). Residues 103–125 (FDCKECEKSFISPASIRRYMVTH) form a C2H2-type 2; degenerate zinc finger. C2H2-type zinc fingers lie at residues 131-153 (YKCKFCGKALDCLSLYLTHERTH), 159-181 (YECKQCGKAFSWHSSVRIHERTH), 187-209 (YECKECGKSFNFSSSFRRHERTH), 215-237 (YKCKECGKAFNCPSSFHRHERTH), 243-265 (YECKLYGKALSRLISFRRHMRMH), 271-293 (HKCKICGKAFYSPSSFQRHERSH), 299-321 (YKCKQCGKAFTCSTSFQYHERTH), 327-349 (DGCKQCGKAFRSAKYIRIHGRTH), 355-377 (YECKQCGKAFHCVSSFHRHERTH), 383-405 (YECKHCGKAFTCSIYIRIHERIH), and 411-433 (YQCKECGKAFIRSSYCRKHERTH).

Belongs to the krueppel C2H2-type zinc-finger protein family.

It localises to the nucleus. In terms of biological role, may be involved in transcriptional regulation. The sequence is that of Zinc finger protein 491 (ZNF491) from Homo sapiens (Human).